Consider the following 36-residue polypeptide: Photosystem I reaction center subunit VIII (36 aa).

The chain crosses the membrane as a helical span at residues 10 to 30; that stretch reads FVPLVGLVFSAIIMVLSFLYI.

Belongs to the PsaI family.

It localises to the plastid. The protein resides in the chloroplast thylakoid membrane. In terms of biological role, may help in the organization of the PsaL subunit. The sequence is that of Photosystem I reaction center subunit VIII from Welwitschia mirabilis (Tree tumbo).